A 106-amino-acid polypeptide reads, in one-letter code: Guanyl-specific ribonuclease Th1 (106 aa).

Disulfide bonds link Cys-5–Cys-103 and Cys-23–Cys-84. Residue His-39 is part of the active site. Glu-58 functions as the Proton acceptor in the catalytic mechanism. The active-site Proton donor is His-92.

It belongs to the ribonuclease N1/T1 family.

The catalysed reaction is [RNA] containing guanosine + H2O = an [RNA fragment]-3'-guanosine-3'-phosphate + a 5'-hydroxy-ribonucleotide-3'-[RNA fragment].. The polypeptide is Guanyl-specific ribonuclease Th1 (Trichoderma harzianum (Hypocrea lixii)).